Consider the following 227-residue polypeptide: 6-phosphogluconolactonase (227 aa).

It belongs to the glucosamine/galactosamine-6-phosphate isomerase family. 6-phosphogluconolactonase subfamily.

The enzyme catalyses 6-phospho-D-glucono-1,5-lactone + H2O = 6-phospho-D-gluconate + H(+). It participates in carbohydrate degradation; pentose phosphate pathway; D-ribulose 5-phosphate from D-glucose 6-phosphate (oxidative stage): step 2/3. Hydrolysis of 6-phosphogluconolactone to 6-phosphogluconate. This is 6-phosphogluconolactonase (pgl) from Helicobacter pylori (strain ATCC 700392 / 26695) (Campylobacter pylori).